We begin with the raw amino-acid sequence, 341 residues long: Serpentine receptor class beta-3 (341 aa).

Residues 1 to 23 lie on the Extracellular side of the membrane; sequence MLETNDSVCELAYQLAYHPVYRS. The N-linked (GlcNAc...) asparagine glycan is linked to Asn-5. A helical membrane pass occupies residues 24–44; the sequence is SQFWSMLVSSLSIPALIYFIT. The Cytoplasmic portion of the chain corresponds to 45–58; that stretch reads RKIFFLHFHGNLKC. The chain crosses the membrane as a helical span at residues 59–79; that stretch reads LLIVYFICNLLFSMALCFAFF. Over 80 to 103 the chain is Extracellular; that stretch reads YQFLIPFFVTSKCQLLINTTLFKW. The N-linked (GlcNAc...) asparagine glycan is linked to Asn-97. A helical membrane pass occupies residues 104-124; sequence GQICSFLLLTSSMLLPIGFSI. The Cytoplasmic segment spans residues 125-141; the sequence is ERFVALGNAQKYESSRT. Residues 142–162 form a helical membrane-spanning segment; that stretch reads FLGPVIIFIIIAVDFSIIFSV. Topologically, residues 163–187 are extracellular; that stretch reads YKNEPFTEGFYSFILVPSTTASQIN. The chain crosses the membrane as a helical span at residues 188-208; the sequence is MYFFVLLFVKIFNLLLNCILL. Residues 209 to 237 lie on the Cytoplasmic side of the membrane; it reads RIHKKIRIKYYSLSVRYEMEEILQSSKFT. Residues 238-258 traverse the membrane as a helical segment; it reads FIIRFTHLLFFGFYVVVILFV. Residues 259–276 lie on the Extracellular side of the membrane; the sequence is RIMGESFFNGTLNYSVAR. N-linked (GlcNAc...) asparagine glycosylation is found at Asn-267 and Asn-271. Residues 277–297 form a helical membrane-spanning segment; it reads GVFCTVPTYNLIIVIIGIKSL. At 298–341 the chain is on the cytoplasmic side; that stretch reads RHLNLQRLNKVQSTVQIKSTGKEGSKNYEDIITNYWDSVSSRTP.

This sequence belongs to the nematode receptor-like protein srb family. In terms of tissue distribution, expressed throughout the head.

It localises to the cell membrane. Its subcellular location is the perikaryon. The protein localises to the cell projection. It is found in the dendrite. Its function is as follows. G-protein coupled receptor. This chain is Serpentine receptor class beta-3, found in Caenorhabditis elegans.